The following is a 265-amino-acid chain: Putative 2-aminoethylphosphonate transport system permease protein PhnV (265 aa).

6 helical membrane passes run 13–33 (GVVA…VILM), 69–89 (LTIG…AALA), 104–124 (VFYL…LVAF), 131–151 (MNGT…AFTF), 185–205 (LPLL…LSMG), and 233–253 (NIAD…LLMM). The ABC transmembrane type-1 domain occupies 65–253 (LLASLTIGFC…LVAITLLLMM (189 aa)).

It belongs to the binding-protein-dependent transport system permease family.

It is found in the cell inner membrane. Functionally, probably part of the PhnSTUV complex (TC 3.A.1.11.5) involved in 2-aminoethylphosphonate import. Probably responsible for the translocation of the substrate across the membrane. This chain is Putative 2-aminoethylphosphonate transport system permease protein PhnV (phnV), found in Salmonella typhimurium (strain LT2 / SGSC1412 / ATCC 700720).